Here is an 89-residue protein sequence, read N- to C-terminus: Small ribosomal subunit protein uS15 (89 aa).

The protein belongs to the universal ribosomal protein uS15 family. Part of the 30S ribosomal subunit. Forms a bridge to the 50S subunit in the 70S ribosome, contacting the 23S rRNA.

Functionally, one of the primary rRNA binding proteins, it binds directly to 16S rRNA where it helps nucleate assembly of the platform of the 30S subunit by binding and bridging several RNA helices of the 16S rRNA. In terms of biological role, forms an intersubunit bridge (bridge B4) with the 23S rRNA of the 50S subunit in the ribosome. The sequence is that of Small ribosomal subunit protein uS15 from Vibrio atlanticus (strain LGP32) (Vibrio splendidus (strain Mel32)).